A 41-amino-acid polypeptide reads, in one-letter code: Large ribosomal subunit protein bL36 (41 aa).

Residues 1–21 (MKIRNSLKSLRGRHRDNQLVR) are disordered.

This sequence belongs to the bacterial ribosomal protein bL36 family.

The sequence is that of Large ribosomal subunit protein bL36 from Methylobacterium sp. (strain 4-46).